A 415-amino-acid polypeptide reads, in one-letter code: Gamma-glutamyl phosphate reductase (415 aa).

The protein belongs to the gamma-glutamyl phosphate reductase family.

The protein localises to the cytoplasm. The catalysed reaction is L-glutamate 5-semialdehyde + phosphate + NADP(+) = L-glutamyl 5-phosphate + NADPH + H(+). Its pathway is amino-acid biosynthesis; L-proline biosynthesis; L-glutamate 5-semialdehyde from L-glutamate: step 2/2. Its function is as follows. Catalyzes the NADPH-dependent reduction of L-glutamate 5-phosphate into L-glutamate 5-semialdehyde and phosphate. The product spontaneously undergoes cyclization to form 1-pyrroline-5-carboxylate. The protein is Gamma-glutamyl phosphate reductase of Bacillus mycoides (strain KBAB4) (Bacillus weihenstephanensis).